A 485-amino-acid chain; its full sequence is E3 ubiquitin-protein ligase RNF14 (485 aa).

Positions 11–137 (DELLALASIY…QFLKEETLTY (127 aa)) constitute an RWD domain. The D-box motif lies at 37-45 (RIYLDLPQN). Residues 217 to 458 (KLFLCSICFC…DSESPCFNRL (242 aa)) form a TRIAD supradomain region. Zn(2+) is bound by residues cysteine 221, cysteine 224, cysteine 239, histidine 241, cysteine 244, cysteine 247, cysteine 266, cysteine 271, cysteine 310, cysteine 315, cysteine 330, cysteine 333, cysteine 338, cysteine 341, and histidine 346. The segment at 221 to 271 (CSICFCEKLGSDCMYFLECKHVYCKACLKDYFEIQIKDGQVKCLNCPEPQC) adopts an RING-type 1 zinc-finger fold. An IBR-type zinc finger spans residues 290–351 (ARYDRLLLQS…RLTYHGLSPC (62 aa)). The residue at position 349 (serine 349) is a Phosphoserine. Zn(2+) is bound by residues cysteine 351, cysteine 405, and cysteine 408. An RING-type 2; atypical zinc finger spans residues 405–434 (CPCCGTPIQKLDGCNKMTCTGCMQYFCWIC). Cysteine 418 is an active-site residue. Zn(2+)-binding residues include cysteine 423, cysteine 426, cysteine 431, cysteine 434, histidine 446, and cysteine 454.

It belongs to the RBR family. RNF14 subfamily. Interacts with GCN1; interaction takes place in response to ribosome collisions and is required for ubiquitination of EEF1A1/eEF1A. Interacts with the ubiquitin-conjugating enzymes UBE2E1 and UBE2E2. Interacts with AR/androgen receptor. Interacts with TCF7/TCF1, TCF7L1/TCF3 and TCF7L2/TCF4; promoting Wnt signaling. In terms of processing, RING-type zinc finger-dependent and UBE2E2-dependent autoubiquitination.

It is found in the cytoplasm. Its subcellular location is the nucleus. The catalysed reaction is [E2 ubiquitin-conjugating enzyme]-S-ubiquitinyl-L-cysteine + [acceptor protein]-L-lysine = [E2 ubiquitin-conjugating enzyme]-L-cysteine + [acceptor protein]-N(6)-ubiquitinyl-L-lysine.. It participates in protein modification; protein ubiquitination. Functionally, E3 ubiquitin-protein ligase that plays a key role in the RNF14-RNF25 translation quality control pathway, a pathway that takes place when a ribosome has stalled during translation, and which promotes ubiquitination and degradation of translation factors on stalled ribosomes. Recruited to stalled ribosomes by the ribosome collision sensor GCN1 and mediates 'Lys-6'-linked ubiquitination of target proteins, leading to their degradation. Mediates ubiquitination of EEF1A1/eEF1A and ETF1/eRF1 translation factors on stalled ribosomes, leading to their degradation. Also catalyzes ubiquitination of ribosomal proteins RPL0, RPL1, RPL12, RPS13 and RPS17. Specifically required to resolve RNA-protein cross-links caused by reactive aldehydes, which trigger translation stress by stalling ribosomes: acts by catalying 'Lys-6'-linked ubiquitination of RNA-protein cross-links, leading to their removal by the ATP-dependent unfoldase VCP and subsequent degradation by the proteasome. Independently of its function in the response to stalled ribosomes, acts as a regulator of transcription in Wnt signaling via its interaction with TCF transcription factors (TCF7/TCF1, TCF7L1/TCF3 and TCF7L2/TCF4). May also play a role as a coactivator for androgen- and, to a lesser extent, progesterone-dependent transcription. The protein is E3 ubiquitin-protein ligase RNF14 of Mus musculus (Mouse).